A 127-amino-acid chain; its full sequence is Large ribosomal subunit protein bL20 (127 aa).

This sequence belongs to the bacterial ribosomal protein bL20 family.

In terms of biological role, binds directly to 23S ribosomal RNA and is necessary for the in vitro assembly process of the 50S ribosomal subunit. It is not involved in the protein synthesizing functions of that subunit. The chain is Large ribosomal subunit protein bL20 (rplT) from Streptomyces coelicolor (strain ATCC BAA-471 / A3(2) / M145).